We begin with the raw amino-acid sequence, 172 residues long: Protein-export protein SecB (172 aa).

This sequence belongs to the SecB family. In terms of assembly, homotetramer, a dimer of dimers. One homotetramer interacts with 1 SecA dimer.

The protein localises to the cytoplasm. In terms of biological role, one of the proteins required for the normal export of preproteins out of the cell cytoplasm. It is a molecular chaperone that binds to a subset of precursor proteins, maintaining them in a translocation-competent state. It also specifically binds to its receptor SecA. This chain is Protein-export protein SecB, found in Xylella fastidiosa (strain Temecula1 / ATCC 700964).